A 178-amino-acid chain; its full sequence is Large ribosomal subunit protein uL6 (178 aa).

This sequence belongs to the universal ribosomal protein uL6 family. As to quaternary structure, part of the 50S ribosomal subunit.

Its function is as follows. This protein binds to the 23S rRNA, and is important in its secondary structure. It is located near the subunit interface in the base of the L7/L12 stalk, and near the tRNA binding site of the peptidyltransferase center. This is Large ribosomal subunit protein uL6 from Campylobacter lari (strain RM2100 / D67 / ATCC BAA-1060).